The chain runs to 715 residues: Scinderin (715 aa).

The segment at 1-363 (MARELYHEEF…DGFGKVYVTE (363 aa)) is actin-severing. One copy of the Gelsolin-like 1 repeat lies at 27–76 (LELVPVPQSAHGDFYVGDAYLVLHTAKTSRGFTYHLHFWLGKECSQDEST). Tyr-102 is subject to Phosphotyrosine. A 1,2-diacyl-sn-glycero-3-phospho-(1D-myo-inositol-4,5-bisphosphate) contacts are provided by residues 112 to 119 (KGGLKYKA) and 138 to 146 (RLLHVKGRR). Gelsolin-like repeat units follow at residues 148 to 188 (VRAT…YERL), 265 to 307 (VVAE…QERK), 398 to 451 (VEIW…DELT), and 523 to 564 (TRIV…EEEK). Positions 364–715 (KVAQIKQIPF…WFLGWDSSKW (352 aa)) are ca(2+)-dependent actin binding. Ca(2+) contacts are provided by Asn-538, Asp-539, and Glu-562. Tyr-599 is subject to Phosphotyrosine. Residues 626 to 668 (FVIEEIPGEFTQDDLAEDDVMLLDAWEQIFIWIGKDANEVEKK) form a Gelsolin-like 6 repeat. Ca(2+) is bound by residues Asp-643, Asp-644, and Glu-666.

Belongs to the villin/gelsolin family. As to expression, expressed in megakaryocytes.

It is found in the cytoplasm. The protein resides in the cytoskeleton. Its subcellular location is the cell projection. The protein localises to the podosome. Ca(2+)-dependent actin filament-severing protein that has a regulatory function in exocytosis by affecting the organization of the microfilament network underneath the plasma membrane. Severing activity is inhibited by phosphatidylinositol 4,5-bis-phosphate (PIP2). In vitro, also has barbed end capping and nucleating activities in the presence of Ca(2+). Required for megakaryocyte differentiation, maturation, polyploidization and apoptosis with the release of platelet-like particles. Plays a role in osteoclastogenesis (OCG) and actin cytoskeletal organization in osteoclasts. Regulates chondrocyte proliferation and differentiation. Inhibits cell proliferation and tumorigenesis. Signaling is mediated by MAPK, p38 and JNK pathways. This Homo sapiens (Human) protein is Scinderin.